The sequence spans 365 residues: Phospho-N-acetylmuramoyl-pentapeptide-transferase (365 aa).

A run of 10 helical transmembrane segments spans residues 22–42 (YISV…LALG), 74–94 (TMGG…WGDL), 95–115 (TSIY…IGFF), 134–154 (KFAL…YLLS), 168–188 (SLYI…IING), 201–221 (GLAI…AYIE), 240–260 (LAEV…FLWF), 267–287 (VFMG…IAVM), 292–312 (LIFF…MLQV), and 342–362 (KVVI…LAAI).

Belongs to the glycosyltransferase 4 family. MraY subfamily. It depends on Mg(2+) as a cofactor.

The protein localises to the cell inner membrane. The enzyme catalyses UDP-N-acetyl-alpha-D-muramoyl-L-alanyl-gamma-D-glutamyl-meso-2,6-diaminopimeloyl-D-alanyl-D-alanine + di-trans,octa-cis-undecaprenyl phosphate = di-trans,octa-cis-undecaprenyl diphospho-N-acetyl-alpha-D-muramoyl-L-alanyl-D-glutamyl-meso-2,6-diaminopimeloyl-D-alanyl-D-alanine + UMP. Its pathway is cell wall biogenesis; peptidoglycan biosynthesis. Catalyzes the initial step of the lipid cycle reactions in the biosynthesis of the cell wall peptidoglycan: transfers peptidoglycan precursor phospho-MurNAc-pentapeptide from UDP-MurNAc-pentapeptide onto the lipid carrier undecaprenyl phosphate, yielding undecaprenyl-pyrophosphoryl-MurNAc-pentapeptide, known as lipid I. In Francisella tularensis subsp. novicida (strain U112), this protein is Phospho-N-acetylmuramoyl-pentapeptide-transferase.